The primary structure comprises 323 residues: tRNA dimethylallyltransferase (323 aa).

12–19 (GPTAAGKT) serves as a coordination point for ATP. 14–19 (TAAGKT) contributes to the substrate binding site. Interaction with substrate tRNA regions lie at residues 37–40 (DSAL) and 161–165 (QRLIR).

Belongs to the IPP transferase family. In terms of assembly, monomer. The cofactor is Mg(2+).

The enzyme catalyses adenosine(37) in tRNA + dimethylallyl diphosphate = N(6)-dimethylallyladenosine(37) in tRNA + diphosphate. Catalyzes the transfer of a dimethylallyl group onto the adenine at position 37 in tRNAs that read codons beginning with uridine, leading to the formation of N6-(dimethylallyl)adenosine (i(6)A). This chain is tRNA dimethylallyltransferase, found in Pseudomonas savastanoi pv. phaseolicola (strain 1448A / Race 6) (Pseudomonas syringae pv. phaseolicola (strain 1448A / Race 6)).